The primary structure comprises 104 residues: Pterin-4-alpha-carbinolamine dehydratase (104 aa).

Alanine 2 carries the N-acetylalanine modification. Residues 61-63 (DHH) and 78-81 (STHE) each bind substrate.

This sequence belongs to the pterin-4-alpha-carbinolamine dehydratase family. As to quaternary structure, homotetramer and homodimer. Heterotetramer with HNF1A; formed by a dimer of dimers. Interacts with HNF1B (via HNF-p1 domain); the interaction increases HNF1B transactivation activity. Mainly expressed in the liver, in pancreatic cells, and in the kidney, especially in the distal convoluted tubule, in the cortical thick ascending limb of Henle's loop and in the connecting tubule.

It localises to the cytoplasm. It is found in the nucleus. It catalyses the reaction (4aS,6R)-4a-hydroxy-L-erythro-5,6,7,8-tetrahydrobiopterin = (6R)-L-erythro-6,7-dihydrobiopterin + H2O. Involved in tetrahydrobiopterin biosynthesis. Seems to both prevent the formation of 7-pterins and accelerate the formation of quinonoid-BH2. Coactivator for HNF1A-dependent transcription. Regulates the dimerization of homeodomain protein HNF1A and enhances its transcriptional activity. Also acts as a coactivator for HNF1B-dependent transcription. This is Pterin-4-alpha-carbinolamine dehydratase (Pcbd1) from Mus musculus (Mouse).